Reading from the N-terminus, the 114-residue chain is Large ribosomal subunit protein bL20 (114 aa).

This sequence belongs to the bacterial ribosomal protein bL20 family.

Binds directly to 23S ribosomal RNA and is necessary for the in vitro assembly process of the 50S ribosomal subunit. It is not involved in the protein synthesizing functions of that subunit. The chain is Large ribosomal subunit protein bL20 from Flavobacterium johnsoniae (strain ATCC 17061 / DSM 2064 / JCM 8514 / BCRC 14874 / CCUG 350202 / NBRC 14942 / NCIMB 11054 / UW101) (Cytophaga johnsonae).